The sequence spans 343 residues: Holliday junction branch migration complex subunit RuvB (343 aa).

A large ATPase domain (RuvB-L) region spans residues 4–193 (TDNLTAAQPQ…FGIVSRLEFY (190 aa)). Residues leucine 32, arginine 33, glycine 74, lysine 77, threonine 78, threonine 79, 140-142 (EDY), arginine 183, tyrosine 193, and arginine 230 contribute to the ATP site. A Mg(2+)-binding site is contributed by threonine 78. A small ATPAse domain (RuvB-S) region spans residues 194–264 (ENRDLTTIVS…IADAALSMLD (71 aa)). The tract at residues 267-343 (AQGLDVMDRK…YLHFGLPVEK (77 aa)) is head domain (RuvB-H). DNA contacts are provided by arginine 322 and arginine 327.

It belongs to the RuvB family. In terms of assembly, homohexamer. Forms an RuvA(8)-RuvB(12)-Holliday junction (HJ) complex. HJ DNA is sandwiched between 2 RuvA tetramers; dsDNA enters through RuvA and exits via RuvB. An RuvB hexamer assembles on each DNA strand where it exits the tetramer. Each RuvB hexamer is contacted by two RuvA subunits (via domain III) on 2 adjacent RuvB subunits; this complex drives branch migration. In the full resolvosome a probable DNA-RuvA(4)-RuvB(12)-RuvC(2) complex forms which resolves the HJ.

It is found in the cytoplasm. It catalyses the reaction ATP + H2O = ADP + phosphate + H(+). Functionally, the RuvA-RuvB-RuvC complex processes Holliday junction (HJ) DNA during genetic recombination and DNA repair, while the RuvA-RuvB complex plays an important role in the rescue of blocked DNA replication forks via replication fork reversal (RFR). RuvA specifically binds to HJ cruciform DNA, conferring on it an open structure. The RuvB hexamer acts as an ATP-dependent pump, pulling dsDNA into and through the RuvAB complex. RuvB forms 2 homohexamers on either side of HJ DNA bound by 1 or 2 RuvA tetramers; 4 subunits per hexamer contact DNA at a time. Coordinated motions by a converter formed by DNA-disengaged RuvB subunits stimulates ATP hydrolysis and nucleotide exchange. Immobilization of the converter enables RuvB to convert the ATP-contained energy into a lever motion, pulling 2 nucleotides of DNA out of the RuvA tetramer per ATP hydrolyzed, thus driving DNA branch migration. The RuvB motors rotate together with the DNA substrate, which together with the progressing nucleotide cycle form the mechanistic basis for DNA recombination by continuous HJ branch migration. Branch migration allows RuvC to scan DNA until it finds its consensus sequence, where it cleaves and resolves cruciform DNA. The chain is Holliday junction branch migration complex subunit RuvB from Neisseria meningitidis serogroup C (strain 053442).